A 1639-amino-acid polypeptide reads, in one-letter code: Merozoite surface protein 1 (1639 aa).

The first 19 residues, methionine 1–cysteine 19, serve as a signal peptide directing secretion. Polar residues-rich tracts occupy residues serine 58–proline 67 and asparagine 107–aspartate 119. Disordered regions lie at residues serine 58–serine 78 and valine 94–alanine 122. N-linked (GlcNAc...) asparagine glycosylation is found at asparagine 116 and asparagine 268. The tract at residues lysine 689–asparagine 764 is disordered. 2 stretches are compositionally biased toward polar residues: residues threonine 694 to serine 704 and glycine 711 to glycine 722. A compositionally biased stretch (low complexity) spans valine 730–glutamine 741. N-linked (GlcNAc...) asparagine glycans are attached at residues asparagine 764, asparagine 768, asparagine 783, and asparagine 844. A disordered region spans residues serine 893–histidine 915. N-linked (GlcNAc...) asparagine glycans are attached at residues asparagine 920, asparagine 964, asparagine 1058, asparagine 1165, and asparagine 1174. The segment at glutamine 1002–tyrosine 1116 is required for binding to host erythrocyte cell membrane. Over residues valine 1199–proline 1212 the composition is skewed to polar residues. Positions valine 1199–threonine 1229 are disordered. N-linked (GlcNAc...) asparagine glycosylation is found at asparagine 1445 and asparagine 1526. EGF-like domains lie at histidine 1530–proline 1570 and asparagine 1571–serine 1618. Cystine bridges form between cysteine 1532–cysteine 1543, cysteine 1537–cysteine 1553, cysteine 1555–cysteine 1566, cysteine 1574–cysteine 1587, cysteine 1581–cysteine 1601, and cysteine 1603–cysteine 1617. The GPI-anchor amidated serine moiety is linked to residue serine 1618. The propeptide at serine 1619–isoleucine 1639 is removed in mature form.

Forms a complex composed of subunits p83, p30, p38, and p42 which remain non-covalently associated; the complex is formed at the merozoite surface prior to egress from host erythrocytes. Forms a complex composed of processed MSP1 subunits, MSP6 subunit p36 and MSP7; the complex is formed at the merozoite surface prior to egress from host erythrocytes. Within the complex, interacts (via subunit p38) with MSP6 subunit p36 and (via subunits p83, p30 and p38) with MSP7 (via subunit p22). Forms a complex composed of MSP1, MSP6, DBLMSP1 and DBLMSP2. Within the complex, interacts (via subunit p38) with DBLMSP1 and DBLMSP2. Forms a complex composed of MSP1, and rhoptry proteins RhopH3, RAP1 and CLAG9/RhopH3. Within the complex, interacts (via subunits p42 and p19) with RhopH3 (via C-terminus). Forms a complex composed of MSP1, MSP6, MSP7, MSP9 and MSP3; within the complex, MSP6 and MSP9 mediate the binding to the host erythrocyte. Interacts (via subunits p19 and p42) with MSP9; the interaction is direct; MSP1 subunits p19 or p42, and MSP9 form a co-ligand complex that interacts with host SLC4A1/Band 3 protein. May interact with PFD6. Interacts with host spectrin. In terms of assembly, interacts with host glycophorin GYPA in a sialic acid-independent manner. As to quaternary structure, interacts with host proinflammatory cytokine S100P; the interaction blocks S100P inflammatory and chemotactic activities. Interacts with host SLC4A1/Band 3 (via 5ABC region) on the host erythrocyte surface in a sialic acid-independent manner. In terms of processing, the p190 precursor is cleaved by SUB1 prior to merozoite egress into 4 subunits p83, p30, p38, and p42 which remain non-covalently associated. SUB1-mediated proteolytic cleavage occurs in an orderly manner; the first cleavage occurs at the p83/p30 site, followed by cleavage at the p30/p38 site, the last cleavage occurs at the p38/p42 site. The order of cleavage is essential for parasite viability. SUB1-mediated processing is essential for merozoite egress. In a second processing step during erythrocyte invasion, p42 is cleaved by SUB2 into p33 and p19; the latter remains attached to the merozoite surface via its GPI-anchor and stays on the surface during the subsequent ring stage.

It is found in the cell membrane. It localises to the secreted. The protein resides in the vacuole membrane. Functionally, during the asexual blood stage, involved in merozoite egress from host erythrocytes possibly via its interaction with the host cytoskeleton protein spectrin resulting in the destabilization of the host cytoskeleton and thus leading to erythrocyte cell membrane rupture. Involved in the binding to host erythrocytes and is required for host erythrocyte invasion. In terms of biological role, by binding to host proinflammatory cytokine S100P may interfere with host immune responses. Involved in merozoite invasion of host erythrocytes. May play a role in the biogenesis and/or function of the food vacuole during the intraerythrocytic development. The sequence is that of Merozoite surface protein 1 from Plasmodium falciparum (isolate Wellcome).